The sequence spans 360 residues: Peptide chain release factor 1 (360 aa).

The residue at position 237 (glutamine 237) is an N5-methylglutamine.

The protein belongs to the prokaryotic/mitochondrial release factor family. Methylated by PrmC. Methylation increases the termination efficiency of RF1.

Its subcellular location is the cytoplasm. In terms of biological role, peptide chain release factor 1 directs the termination of translation in response to the peptide chain termination codons UAG and UAA. The chain is Peptide chain release factor 1 from Stutzerimonas stutzeri (strain A1501) (Pseudomonas stutzeri).